Here is a 62-residue protein sequence, read N- to C-terminus: U10-hottentoxin-Hj3a (62 aa).

The signal sequence occupies residues 1–22 (MQKLLIILILFCILKFNVDVEG). Intrachain disulfides connect C28-C46, C33-C59, and C37-C61.

Belongs to the short scorpion toxin superfamily. Potassium channel inhibitor family. Alpha-KTx 23 subfamily. As to expression, expressed by the venom gland.

It is found in the secreted. Functionally, may block potassium channels. This is U10-hottentoxin-Hj3a from Hottentotta judaicus (Black scorpion).